A 419-amino-acid polypeptide reads, in one-letter code: L-rhamnose isomerase (419 aa).

Residues His262, Asp294, and Asp296 each contribute to the Mn(2+) site.

This sequence belongs to the rhamnose isomerase family. As to quaternary structure, homotetramer. Mn(2+) is required as a cofactor.

It is found in the cytoplasm. The enzyme catalyses L-rhamnopyranose = L-rhamnulose. It functions in the pathway carbohydrate degradation; L-rhamnose degradation; glycerone phosphate from L-rhamnose: step 1/3. Its function is as follows. Catalyzes the interconversion of L-rhamnose and L-rhamnulose. The polypeptide is L-rhamnose isomerase (Escherichia coli (strain K12 / MC4100 / BW2952)).